A 519-amino-acid chain; its full sequence is Probable DNA ligase (519 aa).

Glu-221 contributes to the ATP binding site. Lys-223 (N6-AMP-lysine intermediate) is an active-site residue. Arg-228, Arg-243, Glu-272, Phe-312, Arg-384, and Lys-390 together coordinate ATP.

The protein belongs to the ATP-dependent DNA ligase family. The cofactor is Mg(2+).

The catalysed reaction is ATP + (deoxyribonucleotide)n-3'-hydroxyl + 5'-phospho-(deoxyribonucleotide)m = (deoxyribonucleotide)n+m + AMP + diphosphate.. DNA ligase that seals nicks in double-stranded DNA during DNA replication, DNA recombination and DNA repair. In Mycolicibacterium paratuberculosis (strain ATCC BAA-968 / K-10) (Mycobacterium paratuberculosis), this protein is Probable DNA ligase.